Reading from the N-terminus, the 330-residue chain is Delta-aminolevulinic acid dehydratase (330 aa).

K203 (schiff-base intermediate with substrate) is an active-site residue. R213 and R224 together coordinate 5-aminolevulinate. A Mg(2+)-binding site is contributed by E240. The active-site Schiff-base intermediate with substrate is K255. 5-aminolevulinate-binding residues include S281 and Y320.

Belongs to the ALAD family. Homooctamer.

The enzyme catalyses 2 5-aminolevulinate = porphobilinogen + 2 H2O + H(+). The protein operates within porphyrin-containing compound metabolism; protoporphyrin-IX biosynthesis; coproporphyrinogen-III from 5-aminolevulinate: step 1/4. In terms of biological role, catalyzes an early step in the biosynthesis of tetrapyrroles. Binds two molecules of 5-aminolevulinate per subunit, each at a distinct site, and catalyzes their condensation to form porphobilinogen. The sequence is that of Delta-aminolevulinic acid dehydratase (hemB) from Streptomyces coelicolor (strain ATCC BAA-471 / A3(2) / M145).